A 601-amino-acid chain; its full sequence is MEGSDFLLAGVLFLFAAVAAVPLASRLGIGAVLGYLLAGIAIGPWGLGFISDVDEILHFSELGVVFLMFIIGLELNPSKLWQLRRSIFGVGAAQVLLSAALLAGLLMLTDFAWQAAVVGGIGLAMSSTAMALQLMREKGMNRSESGQLGFSVLLFQDLAVIPALALVPLLAGSADEHFDWMKIGMKVLAFVGMLIGGRYLLRPVFRFIAASGVREVFTAATLLLVLGSALFMDALGLSMALGTFIAGVLLAESEYRHELETAIDPFKGLLLGLFFISVGMSLNLGVLYTHLLWVVISVVVLVAVKILVLYLLARLYGVRSSERMQFAGVLSQGGEFAFVLFSTASSQRLFQGDQMALLLVTVTLSMMTTPLLMKLVDKWLSRQFNGPEEEDEKPWVNDDKPQVIVVGFGRFGQVIGRLLMANKMRITVLERDISAVNLMRKYGYKVYYGDATQVDLLRSAGAEAAVSIVITCNEPEDTMKLVEICQQHFPHLHILARARGRVEAHELLQAGVTQFSRETFSSALELGRKTLVTLGMHPHQAQRAQLHFRRLDMRMLRELIPMHADTVQISRAREARRELEEIFQREMQQERRQLDGWDEFE.

A run of 13 helical transmembrane segments spans residues 4–24 (SDFLLAGVLFLFAAVAAVPLA), 29–49 (IGAVLGYLLAGIAIGPWGLGF), 55–75 (EILHFSELGVVFLMFIIGLEL), 87–107 (IFGVGAAQVLLSAALLAGLLM), 115–135 (AAVVGGIGLAMSSTAMALQLM), 152–172 (VLLFQDLAVIPALALVPLLAG), 177–197 (HFDWMKIGMKVLAFVGMLIGG), 207–227 (FIAASGVREVFTAATLLLVLG), 230–250 (LFMDALGLSMALGTFIAGVLL), 268–288 (GLLLGLFFISVGMSLNLGVLY), 291–311 (LLWVVISVVVLVAVKILVLYL), 324–344 (MQFAGVLSQGGEFAFVLFSTA), and 356–376 (ALLLVTVTLSMMTTPLLMKLV). In terms of domain architecture, RCK N-terminal spans 400–519 (KPQVIVVGFG…AGVTQFSRET (120 aa)).

It belongs to the monovalent cation:proton antiporter 2 (CPA2) transporter (TC 2.A.37) family. KefB subfamily. Interacts with the regulatory subunit KefG.

Its subcellular location is the cell inner membrane. In terms of biological role, pore-forming subunit of a potassium efflux system that confers protection against electrophiles. Catalyzes K(+)/H(+) antiport. The polypeptide is Glutathione-regulated potassium-efflux system protein KefB (Escherichia coli O139:H28 (strain E24377A / ETEC)).